The chain runs to 602 residues: ATP-dependent lipid A-core flippase (602 aa).

Helical transmembrane passes span 28–48 (VGIF…QPML), 84–104 (LLII…NYFL), 158–178 (IKVV…LLWM), 180–200 (WHLT…VSIA), and 268–288 (PMLQ…VLFL). Residues 32 to 323 (LLSIVGFVIF…LSEVSSTIQK (292 aa)) enclose the ABC transmembrane type-1 domain. The ABC transporter domain maps to 355–591 (LEVRNLSFTY…NGHYARLHAM (237 aa)). 389-396 (GRSGSGKS) lines the ATP pocket.

This sequence belongs to the ABC transporter superfamily. Lipid exporter (TC 3.A.1.106) family. In terms of assembly, homodimer.

Its subcellular location is the cell inner membrane. The enzyme catalyses ATP + H2O + lipid A-core oligosaccharideSide 1 = ADP + phosphate + lipid A-core oligosaccharideSide 2.. Functionally, involved in lipopolysaccharide (LPS) biosynthesis. Translocates lipid A-core from the inner to the outer leaflet of the inner membrane. Transmembrane domains (TMD) form a pore in the inner membrane and the ATP-binding domain (NBD) is responsible for energy generation. This is ATP-dependent lipid A-core flippase from Pseudomonas putida (strain ATCC 47054 / DSM 6125 / CFBP 8728 / NCIMB 11950 / KT2440).